The primary structure comprises 450 residues: 23S rRNA (uracil(1939)-C(5))-methyltransferase RlmD (450 aa).

Residues M1 to P22 form a disordered region. A TRAM domain is found at Q20–R78. [4Fe-4S] cluster is bound by residues C91, C97, C100, and C179. S-adenosyl-L-methionine is bound by residues Q283, F312, N317, E333, D360, and D381. Residue C407 is the Nucleophile of the active site.

This sequence belongs to the class I-like SAM-binding methyltransferase superfamily. RNA M5U methyltransferase family. RlmD subfamily.

The catalysed reaction is uridine(1939) in 23S rRNA + S-adenosyl-L-methionine = 5-methyluridine(1939) in 23S rRNA + S-adenosyl-L-homocysteine + H(+). In terms of biological role, catalyzes the formation of 5-methyl-uridine at position 1939 (m5U1939) in 23S rRNA. The sequence is that of 23S rRNA (uracil(1939)-C(5))-methyltransferase RlmD from Pseudomonas fluorescens (strain ATCC BAA-477 / NRRL B-23932 / Pf-5).